Here is a 442-residue protein sequence, read N- to C-terminus: tRNA modification GTPase MnmE (442 aa).

The (6S)-5-formyl-5,6,7,8-tetrahydrofolate site is built by Arg-24, Glu-82, and Lys-120. The region spanning 217-367 (GLHIVITGEP…LISLIKKKAE (151 aa)) is the TrmE-type G domain. Residues 227–232 (NVGKST), 246–252 (SEYAGTT), and 271–274 (DTAG) each bind GTP. Position 231 (Ser-231) interacts with Mg(2+). Ser-246 contacts K(+). Thr-252 lines the Mg(2+) pocket. Lys-442 serves as a coordination point for (6S)-5-formyl-5,6,7,8-tetrahydrofolate.

It belongs to the TRAFAC class TrmE-Era-EngA-EngB-Septin-like GTPase superfamily. TrmE GTPase family. In terms of assembly, homodimer. Heterotetramer of two MnmE and two MnmG subunits. The cofactor is K(+).

It localises to the cytoplasm. In terms of biological role, exhibits a very high intrinsic GTPase hydrolysis rate. Involved in the addition of a carboxymethylaminomethyl (cmnm) group at the wobble position (U34) of certain tRNAs, forming tRNA-cmnm(5)s(2)U34. The polypeptide is tRNA modification GTPase MnmE (Wolbachia pipientis subsp. Culex pipiens (strain wPip)).